The following is a 189-amino-acid chain: Molybdenum cofactor guanylyltransferase (189 aa).

GTP contacts are provided by residues 12–14 (LAG), K24, D68, and D94. D94 is a binding site for Mg(2+).

Belongs to the MobA family. Monomer. The cofactor is Mg(2+).

It is found in the cytoplasm. The enzyme catalyses Mo-molybdopterin + GTP + H(+) = Mo-molybdopterin guanine dinucleotide + diphosphate. Its function is as follows. Transfers a GMP moiety from GTP to Mo-molybdopterin (Mo-MPT) cofactor (Moco or molybdenum cofactor) to form Mo-molybdopterin guanine dinucleotide (Mo-MGD) cofactor. The protein is Molybdenum cofactor guanylyltransferase of Xanthomonas euvesicatoria pv. vesicatoria (strain 85-10) (Xanthomonas campestris pv. vesicatoria).